The chain runs to 581 residues: Polypeptide N-acetylgalactosaminyltransferase 12 (581 aa).

Topologically, residues 1-19 (MWGRTARRRCPRELRRGRE) are cytoplasmic. The chain crosses the membrane as a helical; Signal-anchor for type II membrane protein span at residues 20–37 (ALLVLLALLALAGLGSVL). The Lumenal portion of the chain corresponds to 38-581 (RAQRGAGAGA…QKWFFKERML (544 aa)). The disordered stretch occupies residues 43–67 (AGAGAAEPGPPRTPRPGRREPVMPR). 5 cysteine pairs are disulfide-bonded: cysteine 125–cysteine 358, cysteine 349–cysteine 422, cysteine 458–cysteine 479, cysteine 506–cysteine 521, and cysteine 547–cysteine 566. The catalytic subdomain A stretch occupies residues 135–244 (LPRTSVIIAF…EGWLEPLLQR (110 aa)). Residues aspartate 176 and arginine 205 each coordinate substrate. Aspartate 228 and histidine 230 together coordinate Mn(2+). Residues 304–366 (VIRSPTMAGG…PCSHVGHVFP (63 aa)) are catalytic subdomain B. Residue tryptophan 335 participates in substrate binding. Mn(2+) is bound at residue histidine 363. Tyrosine 371 is a binding site for substrate. The Ricin B-type lectin domain maps to 445–577 (FFGMLQNKGL…NSDHQKWFFK (133 aa)).

It belongs to the glycosyltransferase 2 family. GalNAc-T subfamily. Requires Mn(2+) as cofactor. In terms of tissue distribution, widely expressed at different levels of expression. Highly expressed in digestive organs such as small intestine, stomach, pancreas and colon. Expressed at intermediate level in testis, thyroid gland and spleen. Weakly expressed in whole brain, cerebral cortex, cerebellum, fetal brain, bone marrow, thymus, leukocytes, heart, skeletal muscle, liver, lung, esophagus, kidney, adrenal gland, mammary gland, uterus, placenta, ovary and prostate.

The protein resides in the golgi apparatus membrane. The enzyme catalyses L-seryl-[protein] + UDP-N-acetyl-alpha-D-galactosamine = a 3-O-[N-acetyl-alpha-D-galactosaminyl]-L-seryl-[protein] + UDP + H(+). It carries out the reaction L-threonyl-[protein] + UDP-N-acetyl-alpha-D-galactosamine = a 3-O-[N-acetyl-alpha-D-galactosaminyl]-L-threonyl-[protein] + UDP + H(+). It functions in the pathway protein modification; protein glycosylation. Catalyzes the initial reaction in O-linked oligosaccharide biosynthesis, the transfer of an N-acetyl-D-galactosamine residue to a serine or threonine residue on the protein receptor. Has activity toward non-glycosylated peptides such as Muc5AC, Muc1a and EA2, and no detectable activity with Muc2 and Muc7. Displays enzymatic activity toward the Gal-NAc-Muc5AC glycopeptide, but no detectable activity to mono-GalNAc-glycosylated Muc1a, Muc2, Muc7 and EA2. May play an important role in the initial step of mucin-type oligosaccharide biosynthesis in digestive organs. The chain is Polypeptide N-acetylgalactosaminyltransferase 12 (GALNT12) from Homo sapiens (Human).